Here is a 234-residue protein sequence, read N- to C-terminus: Transcription factor ILR3 (234 aa).

A disordered region spans residues 34–85; it reads QPIGVSSNSSAGVDGSAGNSEASKEPGSKKRGRCESSSATSSKACREKQRRD. Over residues 36-54 the composition is skewed to polar residues; that stretch reads IGVSSNSSAGVDGSAGNSE. One can recognise a bHLH domain in the interval 71–122; that stretch reads SATSSKACREKQRRDRLNDKFMELGAILEPGNPPKTDKAAILVDAVRMVTQL.

Homodimer. Interacts with BTS and BHLH47/PYE. Widely expressed throughout development, mostly in vasculatures.

Its subcellular location is the nucleus. Transcription factor. Plays a role in resistance to amide-linked indole-3-acetic acid (IAA) conjugates such as IAA-Leu and IAA-Phe. May regulate gene expression in response to metal homeostasis changes. This chain is Transcription factor ILR3 (ILR3), found in Arabidopsis thaliana (Mouse-ear cress).